The following is a 965-amino-acid chain: Fibronectin-binding protein A (965 aa).

An N-terminal signal peptide occupies residues 1–36 (MKNNLRYGIRKHKLGAASVFLGTMIVIGMGQDKEAA). Residues 7-18 (YGIRKHKLGAAS) carry the YSIRK-G/S signaling motif motif. The interval 37–206 (ASEQKTTTVE…VTSKVTVEDE (170 aa)) is disordered. The segment at 37 to 514 (ASEQKTTTVE…SNKANGDGKY (478 aa)) is ligand-binding A region. The segment covering 39-55 (EQKTTTVEENGNSATDN) has biased composition (polar residues). Residues 59 to 74 (ETQTTTTNVNTIDETQ) are compositionally biased toward low complexity. The segment covering 75 to 92 (SYSATATEQPSNATQVTT) has biased composition (polar residues). The segment covering 112 to 122 (TVKEEVVKEEA) has biased composition (basic and acidic residues). Residues 126-139 (VKETTQSQDNSGDQ) are compositionally biased toward polar residues. Over residues 179-193 (DVAEAKEASDAKVET) the composition is skewed to basic and acidic residues. A fibrinogen/elastin/tropoelastin-binding region spans residues 194 to 514 (GTDVTSKVTV…SNKANGDGKY (321 aa)). Residues 515–837 (GPIVDSNNFE…EGQQTIEEDT (323 aa)) are fibronectin-binding. The stretch at 548–577 (ENQDNTPLDIDYHTAIDGEGGYVDGYIETI) is one B-1 repeat. The segment at 548 to 607 (ENQDNTPLDIDYHTAIDGEGGYVDGYIETIEETDSSAIDIDYHTAVDSEAGHVGGYTESS) is 2 X approximate tandem repeats. A B-2 repeat occupies 578–607 (EETDSSAIDIDYHTAVDSEAGHVGGYTESS). Disordered regions lie at residues 598–625 (GHVG…NSKH), 743–774 (LGYE…GNII), 794–903 (IEED…GKVV), and 916–942 (VAPT…NKGM). The stretch at 748–770 (GQNSGNQSFEEDTEEDKPKYEQG) is one D-1; truncated repeat. Positions 748 to 839 (GQNSGNQSFE…QQTIEEDTTP (92 aa)) are 4 X approximate tandem repeats. Residues 771–785 (GNIIDIDFDSVPQIH) form a D-2; truncated repeat. A D-3 repeat occupies 786 to 824 (GFNKHNEIIEEDTNKDKPNYQFGGHNSVDFEEDTLPKVS). The span at 794 to 803 (IEEDTNKDKP) shows a compositional bias: basic and acidic residues. One copy of the D-4; truncated repeat lies at 825–839 (GQNEGQQTIEEDTTP). The span at 839 to 885 (PPTPPTPEVPSEPGTPTPPTPEVPSEPGKPTPPTPEVPAEPGKPVPP) shows a compositional bias: pro residues. 4 WR repeats span residues 840-853 (PTPP…EPGT), 854-867 (PTPP…EPGK), 868-881 (PTPP…EPGK), and 882-895 (PVPP…KPSK). Residues 840 to 895 (PTPPTPEVPSEPGTPTPPTPEVPSEPGKPTPPTPEVPAEPGKPVPPAKEEPKKPSK) form a 4 X tandem repeats, Pro-rich (WR) region. The LPXTG sorting signal signature appears at 929–933 (LPETG). Thr932 is modified (pentaglycyl murein peptidoglycan amidated threonine). Residues 933 to 965 (GGEESTNKGMLFGGLFSILGLALLRRNKKNHKA) constitute a propeptide, removed by sortase.

The protein localises to the secreted. It localises to the cell wall. In terms of biological role, promotes bacterial attachment to multiple substrates, such as fibronectin (Fn), fibrinogen (Fg), elastin peptides and tropoelastin. This confers to S.aureus the ability to invade endothelial cells. Promotes adherence to and aggregation of activated platelets. This Staphylococcus aureus (strain MRSA252) protein is Fibronectin-binding protein A (fnbA).